A 602-amino-acid chain; its full sequence is Elongation factor 4 (602 aa).

The 182-residue stretch at 7-188 (ENIRNFSIIA…SIIRLVPPPK (182 aa)) folds into the tr-type G domain. GTP contacts are provided by residues 19 to 24 (DHGKST) and 135 to 138 (NKID).

This sequence belongs to the TRAFAC class translation factor GTPase superfamily. Classic translation factor GTPase family. LepA subfamily.

It localises to the cell inner membrane. The enzyme catalyses GTP + H2O = GDP + phosphate + H(+). Required for accurate and efficient protein synthesis under certain stress conditions. May act as a fidelity factor of the translation reaction, by catalyzing a one-codon backward translocation of tRNAs on improperly translocated ribosomes. Back-translocation proceeds from a post-translocation (POST) complex to a pre-translocation (PRE) complex, thus giving elongation factor G a second chance to translocate the tRNAs correctly. Binds to ribosomes in a GTP-dependent manner. This Chlamydia trachomatis serovar L2 (strain ATCC VR-902B / DSM 19102 / 434/Bu) protein is Elongation factor 4.